The chain runs to 235 residues: Chaperone protein TorD (235 aa).

Belongs to the TorD/DmsD family. TorD subfamily.

It is found in the cytoplasm. Its function is as follows. Involved in the biogenesis of TorA. Acts on TorA before the insertion of the molybdenum cofactor and, as a result, probably favors a conformation of the apoenzyme that is competent for acquiring the cofactor. In Shewanella amazonensis (strain ATCC BAA-1098 / SB2B), this protein is Chaperone protein TorD.